Consider the following 104-residue polypeptide: Salivary protein FS145 (104 aa).

Residues Met-1 to Cys-18 form the signal peptide. 4 cysteine pairs are disulfide-bonded: Cys-32–Cys-80, Cys-62–Cys-89, Cys-72–Cys-100, and Cys-76–Cys-102. The short motif at Trp-92–Asp-94 is the Putative integrin attachment site; atypical (WGD) element.

In terms of assembly, interacts with host integrin alpha-V/beta-3 (ITGAV:ITGB3).

Its subcellular location is the secreted. Inhibits proliferation, adhesion and migration of host cells as well as host angiogenesis by blocking host integrin alpha-V/beta-3 (ITGAV:ITGB3). This is Salivary protein FS145 from Xenopsylla cheopis (Oriental rat flea).